Reading from the N-terminus, the 1444-residue chain is DNA polymerase III PolC-type (1444 aa).

The 157-residue stretch at 428-584 (YCVFDVETTG…FDAEATAYLA (157 aa)) folds into the Exonuclease domain.

It belongs to the DNA polymerase type-C family. PolC subfamily.

It localises to the cytoplasm. The enzyme catalyses DNA(n) + a 2'-deoxyribonucleoside 5'-triphosphate = DNA(n+1) + diphosphate. Required for replicative DNA synthesis. This DNA polymerase also exhibits 3' to 5' exonuclease activity. The protein is DNA polymerase III PolC-type of Listeria innocua serovar 6a (strain ATCC BAA-680 / CLIP 11262).